The following is a 447-amino-acid chain: N-succinylarginine dihydrolase (447 aa).

Substrate-binding positions include A19 to S28, N110, and H137 to R138. E174 is an active-site residue. R212 contributes to the substrate binding site. H248 is a catalytic residue. Residues D250 and N359 each coordinate substrate. C365 serves as the catalytic Nucleophile.

This sequence belongs to the succinylarginine dihydrolase family. Homodimer.

The catalysed reaction is N(2)-succinyl-L-arginine + 2 H2O + 2 H(+) = N(2)-succinyl-L-ornithine + 2 NH4(+) + CO2. The protein operates within amino-acid degradation; L-arginine degradation via AST pathway; L-glutamate and succinate from L-arginine: step 2/5. Its function is as follows. Catalyzes the hydrolysis of N(2)-succinylarginine into N(2)-succinylornithine, ammonia and CO(2). The sequence is that of N-succinylarginine dihydrolase from Citrobacter koseri (strain ATCC BAA-895 / CDC 4225-83 / SGSC4696).